Here is a 393-residue protein sequence, read N- to C-terminus: Lipid-A-disaccharide synthase (393 aa).

It belongs to the LpxB family.

The catalysed reaction is a lipid X + a UDP-2-N,3-O-bis[(3R)-3-hydroxyacyl]-alpha-D-glucosamine = a lipid A disaccharide + UDP + H(+). It participates in bacterial outer membrane biogenesis; LPS lipid A biosynthesis. Its function is as follows. Condensation of UDP-2,3-diacylglucosamine and 2,3-diacylglucosamine-1-phosphate to form lipid A disaccharide, a precursor of lipid A, a phosphorylated glycolipid that anchors the lipopolysaccharide to the outer membrane of the cell. The polypeptide is Lipid-A-disaccharide synthase (Bordetella petrii (strain ATCC BAA-461 / DSM 12804 / CCUG 43448)).